Reading from the N-terminus, the 350-residue chain is RNA 3'-terminal phosphate cyclase (350 aa).

ATP is bound by residues Q100 and 290–294; that span reads FLGDQ. H314 (tele-AMP-histidine intermediate) is an active-site residue.

Belongs to the RNA 3'-terminal cyclase family. Type 1 subfamily.

Its subcellular location is the cytoplasm. It carries out the reaction a 3'-end 3'-phospho-ribonucleotide-RNA + ATP = a 3'-end 2',3'-cyclophospho-ribonucleotide-RNA + AMP + diphosphate. Its function is as follows. Catalyzes the conversion of 3'-phosphate to a 2',3'-cyclic phosphodiester at the end of RNA. The mechanism of action of the enzyme occurs in 3 steps: (A) adenylation of the enzyme by ATP; (B) transfer of adenylate to an RNA-N3'P to produce RNA-N3'PP5'A; (C) and attack of the adjacent 2'-hydroxyl on the 3'-phosphorus in the diester linkage to produce the cyclic end product. The biological role of this enzyme is unknown but it is likely to function in some aspects of cellular RNA processing. The chain is RNA 3'-terminal phosphate cyclase from Thermococcus sibiricus (strain DSM 12597 / MM 739).